We begin with the raw amino-acid sequence, 334 residues long: Nucleoid-associated protein PFL_1060 (334 aa).

The protein belongs to the YejK family.

Its subcellular location is the cytoplasm. It localises to the nucleoid. This is Nucleoid-associated protein PFL_1060 from Pseudomonas fluorescens (strain ATCC BAA-477 / NRRL B-23932 / Pf-5).